The chain runs to 231 residues: Staphylococcal superantigen-like 7 (231 aa).

The signal sequence occupies residues 1 to 30; sequence MKLKTLAKATLALGLLTTGVITSEGQAVQA.

Belongs to the staphylococcal/streptococcal toxin family. Interacts with host IgA and complement C5; these interactions inhibits complement activation.

The protein resides in the secreted. Functionally, plays a role in the inhibition of host complement-mediated lysis and serum bactericidal activity by interacting with complement component C5. Affects all three pathways of complement activation and inhibits the cleavage of C5 by preventing its binding to C5 convertases. In turn, prevents C5a-mediated neutrophil migration. The polypeptide is Staphylococcal superantigen-like 7 (Staphylococcus aureus (strain NCTC 8325 / PS 47)).